The primary structure comprises 160 residues: Transcription elongation factor GreB (160 aa).

This sequence belongs to the GreA/GreB family. GreB subfamily.

Its function is as follows. Necessary for efficient RNA polymerase transcription elongation past template-encoded arresting sites. The arresting sites in DNA have the property of trapping a certain fraction of elongating RNA polymerases that pass through, resulting in locked ternary complexes. Cleavage of the nascent transcript by cleavage factors such as GreA or GreB allows the resumption of elongation from the new 3'terminus. GreB releases sequences of up to 9 nucleotides in length. This Vibrio vulnificus (strain YJ016) protein is Transcription elongation factor GreB.